Consider the following 681-residue polypeptide: Oligopeptidase A (681 aa).

Zn(2+) is bound at residue histidine 470. Glutamate 471 is a catalytic residue. Zn(2+)-binding residues include histidine 474 and histidine 477.

This sequence belongs to the peptidase M3 family. The cofactor is Zn(2+).

The catalysed reaction is Hydrolysis of oligopeptides, with broad specificity. Gly or Ala commonly occur as P1 or P1' residues, but more distant residues are also important, as is shown by the fact that Z-Gly-Pro-Gly-|-Gly-Pro-Ala is cleaved, but not Z-(Gly)(5).. May play a specific role in the degradation of signal peptides after they are released from precursor forms of secreted proteins. Can cleave N-acetyl-L-Ala(4). In Haemophilus influenzae (strain ATCC 51907 / DSM 11121 / KW20 / Rd), this protein is Oligopeptidase A (prlC).